A 688-amino-acid chain; its full sequence is Pentatricopeptide repeat-containing protein At3g18020 (688 aa).

17 PPR repeats span residues 53–88 (DRAY…GYRP), 89–123 (DSLN…GFIP), 124–158 (DERT…KKEF), 161–195 (SLTN…GHLP), 196–230 (DVVT…GIRP), 231–261 (NSLT…LWEY), 271–305 (KAAA…ESVN), 306–340 (VEFA…GLKP), 341–375 (RRTS…EFFP), 376–406 (SEYT…MLRK), 411–445 (RTRI…DCRP), 446–480 (DEYT…KFCA), 482–517 (DAVT…KIKP), 518–552 (GVVA…SVTA), 553–583 (DSTT…VIWP), 588–622 (DAFV…GAIP), and 623–657 (NVVC…GQAP).

The protein belongs to the PPR family. P subfamily.

The polypeptide is Pentatricopeptide repeat-containing protein At3g18020 (Arabidopsis thaliana (Mouse-ear cress)).